A 692-amino-acid chain; its full sequence is DNA ligase (692 aa).

Over residues 1 to 14 (MQPDLFSTASQADA) the composition is skewed to polar residues. A disordered region spans residues 1–27 (MQPDLFSTASQADANATPEEPDASNPA). NAD(+) contacts are provided by residues 54 to 58 (DAEYD), 103 to 104 (SL), and Glu134. Catalysis depends on Lys136, which acts as the N6-AMP-lysine intermediate. The NAD(+) site is built by Arg157, Glu194, Lys311, and Lys335. The Zn(2+) site is built by Cys429, Cys432, Cys447, and Cys454. One can recognise a BRCT domain in the interval 612 to 692 (NKPKPFAGKT…ALLQLLDTHE (81 aa)).

It belongs to the NAD-dependent DNA ligase family. LigA subfamily. Requires Mg(2+) as cofactor. Mn(2+) is required as a cofactor.

It carries out the reaction NAD(+) + (deoxyribonucleotide)n-3'-hydroxyl + 5'-phospho-(deoxyribonucleotide)m = (deoxyribonucleotide)n+m + AMP + beta-nicotinamide D-nucleotide.. Its function is as follows. DNA ligase that catalyzes the formation of phosphodiester linkages between 5'-phosphoryl and 3'-hydroxyl groups in double-stranded DNA using NAD as a coenzyme and as the energy source for the reaction. It is essential for DNA replication and repair of damaged DNA. This chain is DNA ligase, found in Janthinobacterium sp. (strain Marseille) (Minibacterium massiliensis).